The primary structure comprises 452 residues: General transcription and DNA repair factor IIH subunit TFB2 (452 aa).

It belongs to the TFB2 family. In terms of assembly, component of the 7-subunit TFIIH core complex composed of XPB, XPD, TFB1/GTF2H1, GTF2H2/P44, TFB4/GTF2H3, TFB2/GTF2H4 and TFB5/GTF2H5, which is active in NER. The core complex associates with the 3-subunit CDK-activating kinase (CAK) module composed of CYCH1/cyclin H1, CDKD and MAT1/At4g30820 to form the 10-subunit holoenzyme (holo-TFIIH) active in transcription.

Its subcellular location is the nucleus. Its function is as follows. Component of the general transcription and DNA repair factor IIH (TFIIH) core complex, which is involved in general and transcription-coupled nucleotide excision repair (NER) of damaged DNA and, when complexed to CAK, in RNA transcription by RNA polymerase II. In NER, TFIIH acts by opening DNA around the lesion to allow the excision of the damaged oligonucleotide and its replacement by a new DNA fragment. In transcription, TFIIH has an essential role in transcription initiation. When the pre-initiation complex (PIC) has been established, TFIIH is required for promoter opening and promoter escape. Phosphorylation of the C-terminal tail (CTD) of the largest subunit of RNA polymerase II by the kinase module CAK controls the initiation of transcription. The chain is General transcription and DNA repair factor IIH subunit TFB2 from Arabidopsis thaliana (Mouse-ear cress).